A 332-amino-acid chain; its full sequence is Biotin synthase (332 aa).

Residues 53 to 282 (HFGKKVKLNM…TKEIRISGGR (230 aa)) enclose the Radical SAM core domain. C71, C75, and C78 together coordinate [4Fe-4S] cluster. [2Fe-2S] cluster is bound by residues C115, C147, C207, and R277.

Belongs to the radical SAM superfamily. Biotin synthase family. Homodimer. It depends on [4Fe-4S] cluster as a cofactor. Requires [2Fe-2S] cluster as cofactor.

It carries out the reaction (4R,5S)-dethiobiotin + (sulfur carrier)-SH + 2 reduced [2Fe-2S]-[ferredoxin] + 2 S-adenosyl-L-methionine = (sulfur carrier)-H + biotin + 2 5'-deoxyadenosine + 2 L-methionine + 2 oxidized [2Fe-2S]-[ferredoxin]. It participates in cofactor biosynthesis; biotin biosynthesis; biotin from 7,8-diaminononanoate: step 2/2. Its function is as follows. Catalyzes the conversion of dethiobiotin (DTB) to biotin by the insertion of a sulfur atom into dethiobiotin via a radical-based mechanism. This is Biotin synthase from Bacillus mycoides (strain KBAB4) (Bacillus weihenstephanensis).